We begin with the raw amino-acid sequence, 630 residues long: uncharacterized protein (630 aa).

4 helical membrane-spanning segments follow: residues 254 to 274, 504 to 524, 564 to 584, and 601 to 621; these read MFYAVINTYLIMLISVEELRV, IALLESLSFSWLDPFYGLTSI, MIFAYIAAFVVGFINFFSMVF, and IIVISIASVLAFILIVIAVLF.

The protein resides in the cell membrane. This is an uncharacterized protein from Mycoplasma genitalium (strain ATCC 33530 / DSM 19775 / NCTC 10195 / G37) (Mycoplasmoides genitalium).